The primary structure comprises 600 residues: ATP-dependent zinc metalloprotease FtsH 1 (600 aa).

Residues 1–8 are Cytoplasmic-facing; the sequence is MKTHYFKK. Residues 9–29 form a helical membrane-spanning segment; it reads IFNLKFLVIFFSILFCILLIL. Over 30-130 the chain is Extracellular; it reads DLTFERRIKG…PKTDFHLSEL (101 aa). Residues 131-151 form a helical membrane-spanning segment; the sequence is ILSLVPIVSSTIFMFYIISNI. The Cytoplasmic portion of the chain corresponds to 152 to 600; sequence KKSSGKLNSN…IEQLVVNTKK (449 aa). 215–222 is an ATP binding site; sequence GPPGTGKT. His437 contacts Zn(2+). Glu438 is a catalytic residue. Residues His441 and Asp513 each contribute to the Zn(2+) site.

This sequence in the central section; belongs to the AAA ATPase family. It in the C-terminal section; belongs to the peptidase M41 family. As to quaternary structure, homohexamer. It depends on Zn(2+) as a cofactor.

It localises to the cell membrane. Functionally, acts as a processive, ATP-dependent zinc metallopeptidase for both cytoplasmic and membrane proteins. Plays a role in the quality control of integral membrane proteins. This Phytoplasma mali (strain AT) protein is ATP-dependent zinc metalloprotease FtsH 1.